Here is a 228-residue protein sequence, read N- to C-terminus: Caspase recruitment domain-containing protein 19 (228 aa).

A disulfide bond links Cys-7 and Cys-77. Residues 8-99 enclose the CARD domain; the sequence is DRLVQDTPFL…PLHSRLPSRH (92 aa). A Phosphoserine modification is found at Val-113.

In terms of assembly, associates with BCL10 by CARD-CARD interaction. In terms of tissue distribution, expressed in ovary, testis, placenta, skeletal muscle, kidney, lung, heart and liver (at protein level). Expressed in thymus and brain.

Its subcellular location is the nucleus. It is found in the endoplasmic reticulum membrane. It localises to the mitochondrion membrane. Plays a role in inhibiting the effects of BCL10-induced activation of NF-kappa-B. May inhibit the phosphorylation of BCL10 in a CARD-dependent manner. This Homo sapiens (Human) protein is Caspase recruitment domain-containing protein 19 (CARD19).